A 132-amino-acid chain; its full sequence is Small ribosomal subunit protein uS8 (132 aa).

It belongs to the universal ribosomal protein uS8 family. Part of the 30S ribosomal subunit. Contacts proteins S5 and S12.

In terms of biological role, one of the primary rRNA binding proteins, it binds directly to 16S rRNA central domain where it helps coordinate assembly of the platform of the 30S subunit. This Geotalea daltonii (strain DSM 22248 / JCM 15807 / FRC-32) (Geobacter daltonii) protein is Small ribosomal subunit protein uS8.